A 221-amino-acid polypeptide reads, in one-letter code: ATP phosphoribosyltransferase (221 aa).

It belongs to the ATP phosphoribosyltransferase family. Short subfamily. In terms of assembly, heteromultimer composed of HisG and HisZ subunits.

It localises to the cytoplasm. The enzyme catalyses 1-(5-phospho-beta-D-ribosyl)-ATP + diphosphate = 5-phospho-alpha-D-ribose 1-diphosphate + ATP. It participates in amino-acid biosynthesis; L-histidine biosynthesis; L-histidine from 5-phospho-alpha-D-ribose 1-diphosphate: step 1/9. Catalyzes the condensation of ATP and 5-phosphoribose 1-diphosphate to form N'-(5'-phosphoribosyl)-ATP (PR-ATP). Has a crucial role in the pathway because the rate of histidine biosynthesis seems to be controlled primarily by regulation of HisG enzymatic activity. The protein is ATP phosphoribosyltransferase of Carboxydothermus hydrogenoformans (strain ATCC BAA-161 / DSM 6008 / Z-2901).